The chain runs to 387 residues: uncharacterized protein (387 aa).

The protein localises to the mitochondrion. This is an uncharacterized protein from Paramecium tetraurelia.